A 335-amino-acid chain; its full sequence is Methionyl-tRNA formyltransferase (335 aa).

122–125 (SLLP) lines the (6S)-5,6,7,8-tetrahydrofolate pocket. The disordered stretch occupies residues 203–222 (DSHGPLGEPQDPAKVSKAPR).

Belongs to the Fmt family.

The enzyme catalyses L-methionyl-tRNA(fMet) + (6R)-10-formyltetrahydrofolate = N-formyl-L-methionyl-tRNA(fMet) + (6S)-5,6,7,8-tetrahydrofolate + H(+). Its function is as follows. Attaches a formyl group to the free amino group of methionyl-tRNA(fMet). The formyl group appears to play a dual role in the initiator identity of N-formylmethionyl-tRNA by promoting its recognition by IF2 and preventing the misappropriation of this tRNA by the elongation apparatus. This Rhodopirellula baltica (strain DSM 10527 / NCIMB 13988 / SH1) protein is Methionyl-tRNA formyltransferase.